The following is a 447-amino-acid chain: Argininosuccinate synthase (447 aa).

ATP is bound by residues 20 to 28 (AFSGGLDTS) and A46. Y102 serves as a coordination point for L-citrulline. ATP-binding residues include G132 and T134. T134, N138, and D139 together coordinate L-aspartate. L-citrulline is bound at residue N138. Residue D139 coordinates ATP. Residues R142 and S195 each coordinate L-citrulline. D197 is a binding site for ATP. T204, E206, and E283 together coordinate L-citrulline.

This sequence belongs to the argininosuccinate synthase family. Type 2 subfamily. As to quaternary structure, homotetramer.

Its subcellular location is the cytoplasm. It carries out the reaction L-citrulline + L-aspartate + ATP = 2-(N(omega)-L-arginino)succinate + AMP + diphosphate + H(+). Its pathway is amino-acid biosynthesis; L-arginine biosynthesis; L-arginine from L-ornithine and carbamoyl phosphate: step 2/3. The chain is Argininosuccinate synthase from Neisseria meningitidis serogroup C (strain 053442).